The chain runs to 295 residues: Ribosomal RNA small subunit methyltransferase A (295 aa).

S-adenosyl-L-methionine contacts are provided by N29, L31, G56, E77, D102, and N128.

Belongs to the class I-like SAM-binding methyltransferase superfamily. rRNA adenine N(6)-methyltransferase family. RsmA subfamily.

It localises to the cytoplasm. The enzyme catalyses adenosine(1518)/adenosine(1519) in 16S rRNA + 4 S-adenosyl-L-methionine = N(6)-dimethyladenosine(1518)/N(6)-dimethyladenosine(1519) in 16S rRNA + 4 S-adenosyl-L-homocysteine + 4 H(+). Its function is as follows. Specifically dimethylates two adjacent adenosines (A1518 and A1519) in the loop of a conserved hairpin near the 3'-end of 16S rRNA in the 30S particle. May play a critical role in biogenesis of 30S subunits. In Listeria welshimeri serovar 6b (strain ATCC 35897 / DSM 20650 / CCUG 15529 / CIP 8149 / NCTC 11857 / SLCC 5334 / V8), this protein is Ribosomal RNA small subunit methyltransferase A.